We begin with the raw amino-acid sequence, 187 residues long: UPF0301 protein YqgE (187 aa).

The protein belongs to the UPF0301 (AlgH) family.

The chain is UPF0301 protein YqgE from Shigella boydii serotype 4 (strain Sb227).